The sequence spans 487 residues: MEKSWFNLMFSKGELEYRGELSKAMDSFAPSEKTTISQDRFIYDMDKNFYGWGEHSSYSNNVDLLVSSKDIRNFISDDTFFIRDSNKNSYSIYFDIKKKKFEIDNVLSDLEFLFYSYWSSSYLNNRSKGDNDLHYDPYIKDTKYNCTNHINSCIDSYFRSHICIDSHFLSDSQNSNESYIYNFICSESGKIRERKNYKIRTNRNRSNLMSSKDFDITQNYNQLWIQCDNCYGLMYKKVKMNVCEQCGHYLKMSSSERIELSIDPGTWNPMDEDMVSADPIKFHLKEEPYKNRIDSAQKTTGLTDAVQTGTGQLNGIPVALGVMDFQFMGGSMGSVVGEKITRLIEYATNQCLPLILVCSSGGARMQEGSLSLMQMAKISSVLCDYQSSKKLFYISILTSPTTGGVTASFGMLGDIIIAEPYAYIAFAGKRVIEQTLKKAVPEGSQAAESLLRKGLLDAIVPRNPLKGVLSELFQLHAFCPLNKTEIK.

The 265-residue stretch at 223–487 (LWIQCDNCYG…FCPLNKTEIK (265 aa)) folds into the CoA carboxyltransferase N-terminal domain. Residues C227, C230, C243, and C246 each coordinate Zn(2+). The C4-type zinc finger occupies 227–246 (CDNCYGLMYKKVKMNVCEQC).

This sequence belongs to the AccD/PCCB family. As to quaternary structure, acetyl-CoA carboxylase is a heterohexamer composed of biotin carboxyl carrier protein, biotin carboxylase and 2 subunits each of ACCase subunit alpha and ACCase plastid-coded subunit beta (accD). Requires Zn(2+) as cofactor.

It is found in the plastid. The protein localises to the chloroplast stroma. The enzyme catalyses N(6)-carboxybiotinyl-L-lysyl-[protein] + acetyl-CoA = N(6)-biotinyl-L-lysyl-[protein] + malonyl-CoA. It functions in the pathway lipid metabolism; malonyl-CoA biosynthesis; malonyl-CoA from acetyl-CoA: step 1/1. In terms of biological role, component of the acetyl coenzyme A carboxylase (ACC) complex. Biotin carboxylase (BC) catalyzes the carboxylation of biotin on its carrier protein (BCCP) and then the CO(2) group is transferred by the transcarboxylase to acetyl-CoA to form malonyl-CoA. The sequence is that of Acetyl-coenzyme A carboxylase carboxyl transferase subunit beta, chloroplastic from Nasturtium officinale (Watercress).